Reading from the N-terminus, the 490-residue chain is Hippocampus abundant transcript 1 protein (490 aa).

An N-acetylmethionine modification is found at methionine 1. The Extracellular portion of the chain corresponds to methionine 1 to alanine 40. Residue asparagine 12 is glycosylated (N-linked (GlcNAc...) asparagine). The helical transmembrane segment at valine 41 to valine 61 threads the bilayer. The Cytoplasmic portion of the chain corresponds to leucine 62–asparagine 74. A helical transmembrane segment spans residues glycine 75–leucine 95. Topologically, residues serine 96 to serine 103 are extracellular. The helical transmembrane segment at phenylalanine 104 to tryptophan 124 threads the bilayer. At tryptophan 125–tyrosine 126 the chain is on the cytoplasmic side. Residues phenylalanine 127 to valine 147 traverse the membrane as a helical segment. Residues alanine 148–tyrosine 160 lie on the Extracellular side of the membrane. A helical transmembrane segment spans residues glycine 161–leucine 181. The Cytoplasmic segment spans residues glycine 182 to serine 188. The chain crosses the membrane as a helical span at residues leucine 189–valine 209. Over proline 210–aspartate 243 the chain is Extracellular. A helical transmembrane segment spans residues serine 244–tyrosine 264. Over serine 265–alanine 284 the chain is Cytoplasmic. Residues phenylalanine 285–methionine 305 form a helical membrane-spanning segment. Topologically, residues arginine 306–threonine 313 are extracellular. The chain crosses the membrane as a helical span at residues isoleucine 314–proline 334. At tryptophan 335–methionine 337 the chain is on the cytoplasmic side. The chain crosses the membrane as a helical span at residues tryptophan 338–valine 358. Over serine 359 to glycine 379 the chain is Extracellular. Residues leucine 380–leucine 400 form a helical membrane-spanning segment. Residues lysine 401–proline 427 are Cytoplasmic-facing. The helical transmembrane segment at glycine 428–isoleucine 448 threads the bilayer. The Extracellular segment spans residues proline 449–valine 490. An N-linked (GlcNAc...) asparagine glycan is attached at asparagine 453. The segment at cysteine 465 to valine 490 is disordered.

It belongs to the major facilitator superfamily.

It localises to the membrane. The polypeptide is Hippocampus abundant transcript 1 protein (Homo sapiens (Human)).